Here is a 592-residue protein sequence, read N- to C-terminus: Beta-xylosidase (592 aa).

A signal peptide spans 1–19 (MYLNACRALTLISVLSLLA). Residue Cys-20 is the site of N-palmitoyl cysteine attachment. Residue Cys-20 is the site of S-diacylglycerol cysteine attachment.

The protein belongs to the glycosyl hydrolase 43 family.

The protein localises to the cell outer membrane. Xylosidase involved in ulvan degradation. Ulvan is the main polysaccharide component of the Ulvales (green seaweed) cell wall. It is composed of disaccharide building blocks comprising 3-sulfated rhamnose (Rha3S) linked to D-glucuronic acid (GlcA), L-iduronic acid (IduA), or D-xylose (Xyl). Beta-xylosidase converts Xyl-Rha3S, a product of alpha-L-rhamnosidase acting on Rha-Xyl-Rha3S oligosaccharides, further to Xyl and Rha3S. The polypeptide is Beta-xylosidase (Formosa agariphila (strain DSM 15362 / KCTC 12365 / LMG 23005 / KMM 3901 / M-2Alg 35-1)).